A 548-amino-acid polypeptide reads, in one-letter code: Sulochrin halogenase gedL (548 aa).

The FAD site is built by Gly14, Ala17, and Glu47. Chloride contacts are provided by Ser333 and Gly334. Val335 provides a ligand contact to FAD.

It belongs to the flavin-dependent halogenase family.

The catalysed reaction is sulochrin + 2 FADH2 + 2 chloride + 2 O2 = dihydrogeodin + 2 FAD + 4 H2O + H(+). It functions in the pathway secondary metabolite biosynthesis. Its function is as follows. Sulochrin halogenase; part of the gene cluster that mediates the biosynthesis of geodin, an intermediate in the biosynthesis of other natural products. The pathway begins with the synthesis of atrochrysone thioester by the polyketide synthase (PKS) gedC. The atrochrysone carboxyl ACP thioesterase gedB then breaks the thioester bond and releases the atrochrysone carboxylic acid from gedC. The atrochrysone carboxylic acid is then converted to atrochrysone which is further transformed into emodinanthrone. The next step is performed by the emodinanthrone oxygenase gedH that catalyzes the oxidation of emodinanthrone to emodin. Emodin O-methyltransferase encoded probably by gedA then catalyzes methylation of the 8-hydroxy group of emodin to form questin. Ring cleavage of questin by questin oxidase gedK leads to desmethylsulochrin via several intermediates including questin epoxide. Another methylation step probably catalyzed by methyltransferase gedG leads to the formation of sulochrin which is further converted to dihydrogeodin by the sulochrin halogenase gedL. Finally, the dihydrogeodin oxidase gedJ catalyzes the stereospecific phenol oxidative coupling reaction converting dihydrogeodin to geodin. The sequence is that of Sulochrin halogenase gedL from Aspergillus terreus (strain NIH 2624 / FGSC A1156).